The chain runs to 354 residues: tRNA-specific 2-thiouridylase MnmA (354 aa).

Residues 6–13 and Leu33 contribute to the ATP site; that span reads LLSGGVDS. Cys100 functions as the Nucleophile in the catalytic mechanism. An intrachain disulfide couples Cys100 to Cys195. Gly123 is an ATP binding site. An interaction with tRNA region spans residues 145–147; that stretch reads KDQ. Cys195 functions as the Cysteine persulfide intermediate in the catalytic mechanism.

The protein belongs to the MnmA/TRMU family.

It localises to the cytoplasm. It catalyses the reaction S-sulfanyl-L-cysteinyl-[protein] + uridine(34) in tRNA + AH2 + ATP = 2-thiouridine(34) in tRNA + L-cysteinyl-[protein] + A + AMP + diphosphate + H(+). Catalyzes the 2-thiolation of uridine at the wobble position (U34) of tRNA, leading to the formation of s(2)U34. This Borrelia hermsii (strain HS1 / DAH) protein is tRNA-specific 2-thiouridylase MnmA.